A 191-amino-acid chain; its full sequence is Protein GrpE (191 aa).

A compositionally biased stretch (basic and acidic residues) spans 1-21 (MSDKKKNAEEFEETFSDKTSE). Positions 1–39 (MSDKKKNAEEFEETFSDKTSEDESTVENETVEENENEDV) are disordered. Positions 22–38 (DESTVENETVEENENED) are enriched in acidic residues.

This sequence belongs to the GrpE family. In terms of assembly, homodimer.

It localises to the cytoplasm. Participates actively in the response to hyperosmotic and heat shock by preventing the aggregation of stress-denatured proteins, in association with DnaK and GrpE. It is the nucleotide exchange factor for DnaK and may function as a thermosensor. Unfolded proteins bind initially to DnaJ; upon interaction with the DnaJ-bound protein, DnaK hydrolyzes its bound ATP, resulting in the formation of a stable complex. GrpE releases ADP from DnaK; ATP binding to DnaK triggers the release of the substrate protein, thus completing the reaction cycle. Several rounds of ATP-dependent interactions between DnaJ, DnaK and GrpE are required for fully efficient folding. This chain is Protein GrpE, found in Tetragenococcus halophilus (Pediococcus halophilus).